A 106-amino-acid polypeptide reads, in one-letter code: Large ribosomal subunit protein uL24 (106 aa).

Belongs to the universal ribosomal protein uL24 family. In terms of assembly, part of the 50S ribosomal subunit.

Functionally, one of two assembly initiator proteins, it binds directly to the 5'-end of the 23S rRNA, where it nucleates assembly of the 50S subunit. Its function is as follows. One of the proteins that surrounds the polypeptide exit tunnel on the outside of the subunit. This is Large ribosomal subunit protein uL24 from Thermosipho africanus (strain TCF52B).